Here is a 253-residue protein sequence, read N- to C-terminus: Porin thermoregulatory protein EnvY (253 aa).

Residues 149–246 (DSVCRIIQSD…GLTPLNYLAK (98 aa)) form the HTH araC/xylS-type domain. 2 consecutive DNA-binding regions (H-T-H motif) follow at residues 166 to 187 (RIVA…KNEN) and 213 to 236 (ITQV…KAFY).

Functionally, influences the temperature-dependent expression of several E.coli envelope proteins, most notably the porins OmpF and OmpC and the lambda receptor, LamB. This chain is Porin thermoregulatory protein EnvY (envY), found in Escherichia coli (strain K12).